We begin with the raw amino-acid sequence, 521 residues long: Protein disulfide-isomerase A5 (521 aa).

The N-terminal stretch at 1 to 25 (MARVVPAWLLLPLAVWVVLPTWLSS) is a signal peptide. 3 consecutive Thioredoxin domains span residues 136–263 (FLKD…NPQP), 274–386 (ADEG…NPES), and 387–508 (PPPP…TLRE). Cystine bridges form between C184/C187, C307/C310, and C428/C431. Residues 518–521 (KEEL) carry the Prevents secretion from ER motif.

It belongs to the protein disulfide isomerase family.

The protein resides in the endoplasmic reticulum lumen. The catalysed reaction is Catalyzes the rearrangement of -S-S- bonds in proteins.. This chain is Protein disulfide-isomerase A5 (PDIA5), found in Bos taurus (Bovine).